A 427-amino-acid polypeptide reads, in one-letter code: DEAD-box ATP-dependent RNA helicase 56 (427 aa).

The tract at residues 1 to 30 (MGDARDNEAYEEELLDYEEEDEKVPDSGNK) is disordered. Residues 9 to 23 (AYEEELLDYEEEDEK) are compositionally biased toward acidic residues. The Q motif motif lies at 46 to 74 (SGFRDFLLKPELLRAIVDSGFEHPSEVQH). The region spanning 77-250 (IPQAILGMDV…KKFMQDPMEI (174 aa)) is the Helicase ATP-binding domain. 90–97 (AKSGMGKT) lines the ATP pocket. A DECD box motif is present at residues 197–200 (DECD). The 146-residue stretch at 278–423 (KLNDLLDALD…ELPEQIDTST (146 aa)) folds into the Helicase C-terminal domain.

The protein belongs to the DEAD box helicase family. DECD subfamily. As to quaternary structure, interacts with ALY2 and MOS11.

It localises to the nucleus. The enzyme catalyses ATP + H2O = ADP + phosphate + H(+). In terms of biological role, ATP-dependent RNA helicase involved in pre-mRNA splicing. Required for the export of mRNA out of the nucleus. In addition to ssRNA and dsRNA, binds dsDNA, but not ssDNA. The polypeptide is DEAD-box ATP-dependent RNA helicase 56 (RH56) (Arabidopsis thaliana (Mouse-ear cress)).